Reading from the N-terminus, the 100-residue chain is U-myrmeciitoxin(01)-Mg7c (100 aa).

The first 17 residues, 1–17 (MKLSYLSLALAIILVLA), serve as a signal peptide directing secretion. Residues 18 to 50 (IVYSPHMEVKALADAEPDAIGFADAFGEADAEP) constitute a propeptide that is removed on maturation. An O-linked (GalNAc...) serine glycan is attached at Ser-85. 2 O-linked (GalNAc...) threonine glycosylation sites follow: Thr-94 and Thr-95.

This sequence belongs to the formicidae venom precursor-01 superfamily. Glycosylation is critical to maintaining the aqueous solubility of this protein, but does not directly contribute to its activity. In terms of tissue distribution, expressed by the venom gland.

The protein localises to the secreted. The protein resides in the target cell membrane. Its function is as follows. Neurotoxin that triggers pain behavior and inflammation in mammals, and is paralytic and lethal to insects. Causes a time-dependent increase in cell leak current. May act by targeting membranes. The chain is U-myrmeciitoxin(01)-Mg7c from Myrmecia gulosa (Red bulldog ant).